The chain runs to 461 residues: Methylthioribose transporter (461 aa).

12 consecutive transmembrane segments (helical) span residues 33-53 (LLGI…TVAA), 56-76 (AGPA…LAAF), 102-122 (LLAF…LSAV), 152-172 (MAGA…TAIV), 185-205 (VIVL…IGYV), 213-233 (FMPF…FAYL), 254-274 (VGII…SLVL), 301-321 (VAGI…LALL), 355-375 (TWLT…GTLA), 376-396 (HLVN…VIVL), 409-429 (VPFV…FMYS), and 432-452 (GVTW…YFLY).

It belongs to the amino acid-polyamine-organocation (APC) superfamily.

Its subcellular location is the cell membrane. Its function is as follows. Involved in import of methylthioribose (MTR) into the cell. The polypeptide is Methylthioribose transporter (Bacillus subtilis (strain 168)).